Here is a 478-residue protein sequence, read N- to C-terminus: Cytochrome c-552 (478 aa).

An N-terminal signal peptide occupies residues 1 to 26 (MTRIKINARRIFSLLIPFFFFTSVHA). H94 contacts heme c. Heme-binding residues include C122, C125, and K126. Residues C160, C163, H164, C209, C212, and H213 each contribute to the heme c site. Residues E215, Y216, K261, and Q263 each coordinate Ca(2+). Y216 is a binding site for substrate. H264 lines the substrate pocket. The heme c site is built by H275, C282, C285, H286, H301, C314, C317, H318, and H393.

The protein belongs to the cytochrome c-552 family. Ca(2+) serves as cofactor. It depends on heme c as a cofactor.

Its subcellular location is the periplasm. It carries out the reaction 6 Fe(III)-[cytochrome c] + NH4(+) + 2 H2O = 6 Fe(II)-[cytochrome c] + nitrite + 8 H(+). Its pathway is nitrogen metabolism; nitrate reduction (assimilation). Its function is as follows. Catalyzes the reduction of nitrite to ammonia, consuming six electrons in the process. This Escherichia coli (strain ATCC 8739 / DSM 1576 / NBRC 3972 / NCIMB 8545 / WDCM 00012 / Crooks) protein is Cytochrome c-552.